The primary structure comprises 1612 residues: Chromatin-remodeling ATPase INO80 (1612 aa).

Disordered regions lie at residues M1 to I288, Q387 to E409, R438 to P554, and Q607 to A626. Residues Q10–N25 show a composition bias toward polar residues. The span at P113–S126 shows a compositional bias: low complexity. 2 stretches are compositionally biased toward basic and acidic residues: residues S132 to S148 and R246 to S267. A coiled-coil region spans residues S379–E455. Basic and acidic residues-rich tracts occupy residues S501–A512, P529–E549, and K610–A624. The 126-residue stretch at I570–G695 folds into the DBINO domain. Residues Q612 to L684 adopt a coiled-coil conformation. The Helicase ATP-binding domain occupies V810–T982. An ATP-binding site is contributed by D823–T830. The DEAQ box signature appears at D933–Q936. The Helicase C-terminal domain maps to K1325 to D1485. Positions E1513 to G1612 are disordered. The span at G1523–R1533 shows a compositional bias: basic residues. Residues D1534–E1545 show a composition bias toward basic and acidic residues. The segment covering P1561–T1575 has biased composition (polar residues). Positions K1579–K1594 are enriched in basic residues. Residues T1595–D1604 are compositionally biased toward basic and acidic residues.

It belongs to the SNF2/RAD54 helicase family. As to quaternary structure, component of the INO80 chromatin-remodeling complex.

It is found in the nucleus. It carries out the reaction ATP + H2O = ADP + phosphate + H(+). Functionally, ATPase component of the INO80 complex which remodels chromatin by shifting nucleosomes and is involved in DNA repair. The protein is Chromatin-remodeling ATPase INO80 (ino80) of Emericella nidulans (strain FGSC A4 / ATCC 38163 / CBS 112.46 / NRRL 194 / M139) (Aspergillus nidulans).